Reading from the N-terminus, the 748-residue chain is Translation factor GUF1 homolog 1, mitochondrial (748 aa).

Residues 1-29 (MRVGCCLLLKPIRQRLCTASISSRHIMRW) constitute a mitochondrion transit peptide. The 183-residue stretch at 94–276 (SHIRNFAVVA…AIIERVPPPT (183 aa)) folds into the tr-type G domain. Residues 103–110 (AHVDHGKT), 167–171 (DTPGH), and 221–224 (TKMD) each bind GTP.

This sequence belongs to the TRAFAC class translation factor GTPase superfamily. Classic translation factor GTPase family. LepA subfamily.

It is found in the mitochondrion inner membrane. It carries out the reaction GTP + H2O = GDP + phosphate + H(+). Functionally, promotes mitochondrial protein synthesis. May act as a fidelity factor of the translation reaction, by catalyzing a one-codon backward translocation of tRNAs on improperly translocated ribosomes. Binds to mitochondrial ribosomes in a GTP-dependent manner. This chain is Translation factor GUF1 homolog 1, mitochondrial, found in Trypanosoma cruzi (strain CL Brener).